The sequence spans 427 residues: Large ribosomal subunit protein uL4 (427 aa).

Ala2 carries the N-acetylalanine modification. Position 14 is an N6-acetyllysine (Lys14). The residue at position 97 (Arg97) is an Omega-N-methylarginine. The residue at position 106 (Lys106) is an N6-acetyllysine. A Glycyl lysine isopeptide (Lys-Gly) (interchain with G-Cter in SUMO2) cross-link involves residue Lys239. Lys259 is modified (N6-acetyllysine). Residue Thr266 is modified to Phosphothreonine. Phosphoserine occurs at positions 290 and 295. Arg300 carries the citrulline modification. A Glycyl lysine isopeptide (Lys-Gly) (interchain with G-Cter in SUMO2) cross-link involves residue Lys327. Lys333 and Lys353 each carry N6-acetyllysine. N6-acetyllysine; alternate is present on Lys364. A Glycyl lysine isopeptide (Lys-Gly) (interchain with G-Cter in SUMO1); alternate cross-link involves residue Lys364. At Ser365 the chain carries Phosphoserine. Positions 369–427 (AAVAGKKPVVGKKGKKAAVGVKKQKKPLVGKKAAATKKPAPEKKPAEKKPTTEEKKPAA) are disordered. The segment covering 377–397 (VVGKKGKKAAVGVKKQKKPLV) has biased composition (basic residues). The segment covering 407–427 (PAPEKKPAEKKPTTEEKKPAA) has biased composition (basic and acidic residues).

The protein belongs to the universal ribosomal protein uL4 family. Component of the large ribosomal subunit. May bind IPO9 with low affinity. Interacts with RBM3. Post-translationally, citrullinated by PADI4.

It localises to the cytoplasm. In terms of biological role, component of the large ribosomal subunit. The ribosome is a large ribonucleoprotein complex responsible for the synthesis of proteins in the cell. The polypeptide is Large ribosomal subunit protein uL4 (RPL4) (Pongo abelii (Sumatran orangutan)).